Here is a 926-residue protein sequence, read N- to C-terminus: Glycogenin (926 aa).

Residues Leu-10, Thr-12, Tyr-16, and Arg-85 each coordinate UDP. Residues Leu-10, Thr-12, Tyr-16, Arg-85, Lys-94, Asp-111, Ala-112, Asp-113, Asn-145, Ser-146, Asp-184, Asp-187, and Gln-188 each contribute to the UDP-alpha-D-glucose site. UDP-binding residues include Asp-111, Ala-112, and Asp-113. Asp-111 serves as a coordination point for Mn(2+). Residue Asp-113 coordinates Mn(2+). An O-linked (Glc...) tyrosine glycan is attached at Tyr-219. Residues His-236, Gly-239, and Lys-242 each coordinate UDP. His-236 contacts Mn(2+). UDP-alpha-D-glucose contacts are provided by Gly-239 and Lys-242. Disordered regions lie at residues 379–432 (PSVS…PEMS), 452–476 (YYAH…LPKE), 547–584 (SIQN…PPRH), 611–749 (MSGK…ETVQ), and 768–903 (LPHA…PNTD). Residues 386–402 (LTPPPADAAPAPAPAPV) show a composition bias toward pro residues. Residues 404-413 (TQTEQKTAQP) are compositionally biased toward polar residues. Over residues 456–469 (PESHRPATEHKEPE) the composition is skewed to basic and acidic residues. Low complexity predominate over residues 557-566 (AHSQHQSHAT). The span at 655-683 (SLHSLQSVPGTPRTQYSTFGKSPRLTNAR) shows a compositional bias: polar residues. The segment covering 692–704 (EQPEDSADGDDEN) has biased composition (acidic residues). Positions 733–745 (DRWAQTDRVKTVD) are enriched in basic and acidic residues. Over residues 788-798 (SGNGRAGGGGQ) the composition is skewed to gly residues. Positions 800–812 (EAQTQHQSTYYEY) are enriched in polar residues. 2 stretches are compositionally biased toward low complexity: residues 813 to 824 (QQQHPHSQQSRQ) and 851 to 875 (HAQG…NPNL).

Belongs to the glycosyltransferase 8 family. Glycogenin subfamily. The cofactor is Mn(2+).

It is found in the cytoplasm. It localises to the vacuole. It catalyses the reaction L-tyrosyl-[glycogenin] + UDP-alpha-D-glucose = alpha-D-glucosyl-L-tyrosyl-[glycogenin] + UDP + H(+). The enzyme catalyses [1,4-alpha-D-glucosyl](n)-L-tyrosyl-[glycogenin] + UDP-alpha-D-glucose = [1,4-alpha-D-glucosyl](n+1)-L-tyrosyl-[glycogenin] + UDP + H(+). Self-glucosylating initiator of glycogen synthesis. It catalyzes the formation of a short alpha (1,4)-glucosyl chain covalently attached via a glucose 1-O-tyrosyl linkage to internal tyrosine residues and these chains act as primers for the elongation reaction catalyzed by glycogen synthase. This is Glycogenin from Cryptococcus neoformans var. grubii serotype A (strain H99 / ATCC 208821 / CBS 10515 / FGSC 9487) (Filobasidiella neoformans var. grubii).